The chain runs to 206 residues: uncharacterized protein (206 aa).

Residues E81–R132 are disordered. Residues E82–S96 show a composition bias toward low complexity. Over residues S103–P123 the composition is skewed to basic and acidic residues. Residues Y150 to I166 traverse the membrane as a helical segment.

It localises to the membrane. This is an uncharacterized protein from Dictyostelium discoideum (Social amoeba).